Here is a 273-residue protein sequence, read N- to C-terminus: ATP synthase subunit delta (273 aa).

The disordered stretch occupies residues 55–78 (TDPAQSARPRPSSPSVSSAPRSAA). The segment covering 57–78 (PAQSARPRPSSPSVSSAPRSAA) has biased composition (low complexity).

It belongs to the ATPase delta chain family. As to quaternary structure, F-type ATPases have 2 components, F(1) - the catalytic core - and F(0) - the membrane proton channel. F(1) has five subunits: alpha(3), beta(3), gamma(1), delta(1), epsilon(1). F(0) has three main subunits: a(1), b(2) and c(10-14). The alpha and beta chains form an alternating ring which encloses part of the gamma chain. F(1) is attached to F(0) by a central stalk formed by the gamma and epsilon chains, while a peripheral stalk is formed by the delta and b chains.

It localises to the cell membrane. F(1)F(0) ATP synthase produces ATP from ADP in the presence of a proton or sodium gradient. F-type ATPases consist of two structural domains, F(1) containing the extramembraneous catalytic core and F(0) containing the membrane proton channel, linked together by a central stalk and a peripheral stalk. During catalysis, ATP synthesis in the catalytic domain of F(1) is coupled via a rotary mechanism of the central stalk subunits to proton translocation. Functionally, this protein is part of the stalk that links CF(0) to CF(1). It either transmits conformational changes from CF(0) to CF(1) or is implicated in proton conduction. This chain is ATP synthase subunit delta, found in Streptomyces lividans.